The primary structure comprises 203 residues: tRNA (cytidine(56)-2'-O)-methyltransferase (203 aa).

S-adenosyl-L-methionine contacts are provided by residues L80, 109–113 (GAEKV), and 127–134 (IGNQPHSE). Residues 178–203 (AEQDKAEGKATPGKNWENSGFTGDNP) form a disordered region. A compositionally biased stretch (polar residues) spans 193 to 203 (WENSGFTGDNP).

The protein belongs to the aTrm56 family. As to quaternary structure, homodimer.

It localises to the cytoplasm. The catalysed reaction is cytidine(56) in tRNA + S-adenosyl-L-methionine = 2'-O-methylcytidine(56) in tRNA + S-adenosyl-L-homocysteine + H(+). Specifically catalyzes the AdoMet-dependent 2'-O-ribose methylation of cytidine at position 56 in tRNAs. This is tRNA (cytidine(56)-2'-O)-methyltransferase from Pyrococcus horikoshii (strain ATCC 700860 / DSM 12428 / JCM 9974 / NBRC 100139 / OT-3).